Here is a 675-residue protein sequence, read N- to C-terminus: DNA ligase (675 aa).

NAD(+) contacts are provided by residues 32 to 36, 81 to 82, and Glu-113; these read DAEYD and SL. Lys-115 serves as the catalytic N6-AMP-lysine intermediate. NAD(+) contacts are provided by Arg-136, Glu-173, Lys-291, and Lys-315. Residues Cys-409, Cys-412, Cys-427, and Cys-433 each contribute to the Zn(2+) site. The region spanning 595–675 is the BRCT domain; sequence SEKTYFFNKK…ELNSLIRIKE (81 aa).

Belongs to the NAD-dependent DNA ligase family. LigA subfamily. Requires Mg(2+) as cofactor. It depends on Mn(2+) as a cofactor.

The catalysed reaction is NAD(+) + (deoxyribonucleotide)n-3'-hydroxyl + 5'-phospho-(deoxyribonucleotide)m = (deoxyribonucleotide)n+m + AMP + beta-nicotinamide D-nucleotide.. Functionally, DNA ligase that catalyzes the formation of phosphodiester linkages between 5'-phosphoryl and 3'-hydroxyl groups in double-stranded DNA using NAD as a coenzyme and as the energy source for the reaction. It is essential for DNA replication and repair of damaged DNA. The polypeptide is DNA ligase (Buchnera aphidicola subsp. Acyrthosiphon pisum (strain 5A)).